A 600-amino-acid chain; its full sequence is Chaperone protein DnaK (600 aa).

The residue at position 175 (threonine 175) is a Phosphothreonine; by autocatalysis. Residues 569–578 (SFAQATAQQA) are compositionally biased toward low complexity. The segment at 569–600 (SFAQATAQQANTSESDPKADDSNTIDAEIKQD) is disordered. Residues 583-600 (SDPKADDSNTIDAEIKQD) are compositionally biased toward basic and acidic residues.

This sequence belongs to the heat shock protein 70 family.

Its function is as follows. Acts as a chaperone. The polypeptide is Chaperone protein DnaK (Mesomycoplasma hyopneumoniae (strain J / ATCC 25934 / NCTC 10110) (Mycoplasma hyopneumoniae)).